The following is a 94-amino-acid chain: Integration host factor subunit beta (94 aa).

This sequence belongs to the bacterial histone-like protein family. In terms of assembly, heterodimer of an alpha and a beta chain.

Its function is as follows. This protein is one of the two subunits of integration host factor, a specific DNA-binding protein that functions in genetic recombination as well as in transcriptional and translational control. This chain is Integration host factor subunit beta, found in Ruegeria pomeroyi (strain ATCC 700808 / DSM 15171 / DSS-3) (Silicibacter pomeroyi).